Here is a 238-residue protein sequence, read N- to C-terminus: Ribosomal RNA small subunit methyltransferase G (238 aa).

S-adenosyl-L-methionine contacts are provided by residues Gly-77, Phe-82, 128–129 (AE), and Arg-147.

This sequence belongs to the methyltransferase superfamily. RNA methyltransferase RsmG family.

Its subcellular location is the cytoplasm. Specifically methylates the N7 position of guanine in position 535 of 16S rRNA. This chain is Ribosomal RNA small subunit methyltransferase G, found in Exiguobacterium sibiricum (strain DSM 17290 / CCUG 55495 / CIP 109462 / JCM 13490 / 255-15).